Reading from the N-terminus, the 729-residue chain is Fatty acid oxidation complex subunit alpha (729 aa).

Residues 1–189 form an enoyl-CoA hydratase/isomerase region; that stretch reads MLYKGDTLYL…KIGLVDGVVK (189 aa). Asp-296 is a binding site for substrate. Positions 311-729 are 3-hydroxyacyl-CoA dehydrogenase; that stretch reads ETPKQAAVLG…ARPVGDLKTA (419 aa). NAD(+) is bound by residues Met-324, Asp-343, 400-402, Lys-407, and Ser-429; that span reads VVE. The For 3-hydroxyacyl-CoA dehydrogenase activity role is filled by His-450. Asn-453 lines the NAD(+) pocket. The substrate site is built by Asn-500 and Tyr-660. Residues 708 to 729 form a disordered region; that stretch reads RHNEPYYPPVEPARPVGDLKTA.

The protein in the N-terminal section; belongs to the enoyl-CoA hydratase/isomerase family. In the C-terminal section; belongs to the 3-hydroxyacyl-CoA dehydrogenase family. In terms of assembly, heterotetramer of two alpha chains (FadB) and two beta chains (FadA).

The enzyme catalyses a (3S)-3-hydroxyacyl-CoA + NAD(+) = a 3-oxoacyl-CoA + NADH + H(+). The catalysed reaction is a (3S)-3-hydroxyacyl-CoA = a (2E)-enoyl-CoA + H2O. It catalyses the reaction a 4-saturated-(3S)-3-hydroxyacyl-CoA = a (3E)-enoyl-CoA + H2O. It carries out the reaction (3S)-3-hydroxybutanoyl-CoA = (3R)-3-hydroxybutanoyl-CoA. The enzyme catalyses a (3Z)-enoyl-CoA = a 4-saturated (2E)-enoyl-CoA. The catalysed reaction is a (3E)-enoyl-CoA = a 4-saturated (2E)-enoyl-CoA. It participates in lipid metabolism; fatty acid beta-oxidation. Its function is as follows. Involved in the aerobic and anaerobic degradation of long-chain fatty acids via beta-oxidation cycle. Catalyzes the formation of 3-oxoacyl-CoA from enoyl-CoA via L-3-hydroxyacyl-CoA. It can also use D-3-hydroxyacyl-CoA and cis-3-enoyl-CoA as substrate. This Escherichia coli (strain K12 / MC4100 / BW2952) protein is Fatty acid oxidation complex subunit alpha.